The primary structure comprises 226 residues: uncharacterized protein (226 aa).

The next 4 helical transmembrane spans lie at 25 to 45 (ALAWLCDVFLLAIVLVVIFLI), 54 to 74 (FLLFLVLSCSQTILWTVYFIF), 107 to 127 (ELFLWILLSVLFLVIASYFFI), and 153 to 173 (TITILISFLQLIFIGYFCFSS).

It localises to the cell membrane. This is an uncharacterized protein from Mycoplasma genitalium (strain ATCC 33530 / DSM 19775 / NCTC 10195 / G37) (Mycoplasmoides genitalium).